The following is a 372-amino-acid chain: tRNA N6-adenosine threonylcarbamoyltransferase (372 aa).

Residues His-133, His-137, and Tyr-154 each contribute to the a divalent metal cation site. Substrate-binding positions include 154–158, Asp-186, Gly-201, Glu-205, and Asn-301; that span reads YVSGG. Position 330 (Asp-330) interacts with a divalent metal cation.

The protein belongs to the KAE1 / TsaD family. Component of the EKC/KEOPS complex composed of at least BUD32, CGI121, GON7, KAE1 and PCC1; the whole complex dimerizes. The cofactor is a divalent metal cation.

The protein localises to the cytoplasm. It localises to the nucleus. It catalyses the reaction L-threonylcarbamoyladenylate + adenosine(37) in tRNA = N(6)-L-threonylcarbamoyladenosine(37) in tRNA + AMP + H(+). Its function is as follows. Component of the EKC/KEOPS complex that is required for the formation of a threonylcarbamoyl group on adenosine at position 37 (t(6)A37) in tRNAs that read codons beginning with adenine. The complex is probably involved in the transfer of the threonylcarbamoyl moiety of threonylcarbamoyl-AMP (TC-AMP) to the N6 group of A37. KAE1 likely plays a direct catalytic role in this reaction, but requires other protein(s) of the complex to fulfill this activity. The EKC/KEOPS complex also promotes both telomere uncapping and telomere elongation. The complex is required for efficient recruitment of transcriptional coactivators. The chain is tRNA N6-adenosine threonylcarbamoyltransferase from Candida albicans (strain SC5314 / ATCC MYA-2876) (Yeast).